Here is a 140-residue protein sequence, read N- to C-terminus: Nucleoside diphosphate kinase (140 aa).

6 residues coordinate ATP: Lys11, Phe59, Arg87, Thr93, Arg104, and Asn114. The active-site Pros-phosphohistidine intermediate is His117.

It belongs to the NDK family. Homotetramer. Requires Mg(2+) as cofactor.

The protein localises to the cytoplasm. The enzyme catalyses a 2'-deoxyribonucleoside 5'-diphosphate + ATP = a 2'-deoxyribonucleoside 5'-triphosphate + ADP. It catalyses the reaction a ribonucleoside 5'-diphosphate + ATP = a ribonucleoside 5'-triphosphate + ADP. Functionally, major role in the synthesis of nucleoside triphosphates other than ATP. The ATP gamma phosphate is transferred to the NDP beta phosphate via a ping-pong mechanism, using a phosphorylated active-site intermediate. In Francisella tularensis subsp. mediasiatica (strain FSC147), this protein is Nucleoside diphosphate kinase.